A 137-amino-acid chain; its full sequence is Holo-[acyl-carrier-protein] synthase (137 aa).

Residues Asp-8 and Glu-57 each coordinate Mg(2+).

It belongs to the P-Pant transferase superfamily. AcpS family. Mg(2+) is required as a cofactor.

The protein resides in the cytoplasm. It catalyses the reaction apo-[ACP] + CoA = holo-[ACP] + adenosine 3',5'-bisphosphate + H(+). Functionally, transfers the 4'-phosphopantetheine moiety from coenzyme A to a Ser of acyl-carrier-protein. In Cereibacter sphaeroides (strain ATCC 17025 / ATH 2.4.3) (Rhodobacter sphaeroides), this protein is Holo-[acyl-carrier-protein] synthase.